The chain runs to 166 residues: Cofilin-1 (166 aa).

N-acetylalanine is present on A2. The residue at position 3 (S3) is a Phosphoserine; by NRK. The ADF-H domain maps to 4–153 (GVAVSDGVIK…KDRCTLAEKL (150 aa)). S8 carries the post-translational modification Phosphoserine. K13 carries the N6-acetyllysine modification. Position 25 is a phosphothreonine (T25). The Nuclear localization signal motif lies at 30-34 (KKRKK). S41 is subject to Phosphoserine. Position 63 is a phosphothreonine (T63). Y68 bears the Phosphotyrosine mark. K73 carries the N6-acetyllysine modification. Y82 bears the Phosphotyrosine mark. S108 carries the phosphoserine modification. K132 is covalently cross-linked (Glycyl lysine isopeptide (Lys-Gly) (interchain with G-Cter in SUMO2)). Residue Y140 is modified to Phosphotyrosine. The residue at position 144 (K144) is an N6-acetyllysine. S156 carries the phosphoserine modification.

The protein belongs to the actin-binding proteins ADF family. In terms of assembly, can bind G- and F-actin in a 1:1 ratio of cofilin to actin. It is a major component of intranuclear and cytoplasmic actin rods. Interacts with the subcortical maternal complex (SCMC) via interaction with TLE6 isoform 1 and NLRP5. Interacts with C9orf72. (Microbial infection) Interacts with human respiratory syncytial virus (HRSV) matrix protein; this interaction probably facilitates viral replication. In terms of processing, inactivated by phosphorylation on Ser-3. Phosphorylated on Ser-3 in resting cells. Dephosphorylated by PDXP/chronophin; this restores its activity in promoting actin filament depolymerization. The phosphorylation of Ser-24 may prevent recognition of the nuclear localization signal. Phosphorylated via a ARRB1-RAC1-LIMK1-PAK1 cascade upon active ligand stimulation of atypical chemokine receptor ACKR2. Widely distributed in various tissues.

The protein resides in the nucleus matrix. It localises to the cytoplasm. The protein localises to the cytoskeleton. Its subcellular location is the cell projection. It is found in the ruffle membrane. The protein resides in the lamellipodium membrane. It localises to the lamellipodium. The protein localises to the growth cone. Its subcellular location is the axon. Functionally, binds to F-actin and exhibits pH-sensitive F-actin depolymerizing activity. In conjunction with the subcortical maternal complex (SCMC), plays an essential role for zygotes to progress beyond the first embryonic cell divisions via regulation of actin dynamics. Required for the centralization of the mitotic spindle and symmetric division of zygotes. Plays a role in the regulation of cell morphology and cytoskeletal organization in epithelial cells. Required for the up-regulation of atypical chemokine receptor ACKR2 from endosomal compartment to cell membrane, increasing its efficiency in chemokine uptake and degradation. Required for neural tube morphogenesis and neural crest cell migration. The chain is Cofilin-1 (CFL1) from Homo sapiens (Human).